A 302-amino-acid polypeptide reads, in one-letter code: Quinolinate synthase (302 aa).

Residues histidine 24 and serine 41 each coordinate iminosuccinate. Cysteine 86 provides a ligand contact to [4Fe-4S] cluster. Residues 112 to 114 (YVN) and serine 129 each bind iminosuccinate. Cysteine 173 provides a ligand contact to [4Fe-4S] cluster. Iminosuccinate contacts are provided by residues 199 to 201 (HPE) and threonine 216. Cysteine 259 serves as a coordination point for [4Fe-4S] cluster.

This sequence belongs to the quinolinate synthase family. Type 2 subfamily. It depends on [4Fe-4S] cluster as a cofactor.

It localises to the cytoplasm. The catalysed reaction is iminosuccinate + dihydroxyacetone phosphate = quinolinate + phosphate + 2 H2O + H(+). It participates in cofactor biosynthesis; NAD(+) biosynthesis; quinolinate from iminoaspartate: step 1/1. Catalyzes the condensation of iminoaspartate with dihydroxyacetone phosphate to form quinolinate. This chain is Quinolinate synthase, found in Thermococcus kodakarensis (strain ATCC BAA-918 / JCM 12380 / KOD1) (Pyrococcus kodakaraensis (strain KOD1)).